Consider the following 187-residue polypeptide: Elongation factor P (187 aa).

The protein belongs to the elongation factor P family.

The protein resides in the cytoplasm. The protein operates within protein biosynthesis; polypeptide chain elongation. Involved in peptide bond synthesis. Stimulates efficient translation and peptide-bond synthesis on native or reconstituted 70S ribosomes in vitro. Probably functions indirectly by altering the affinity of the ribosome for aminoacyl-tRNA, thus increasing their reactivity as acceptors for peptidyl transferase. This Helicobacter pylori (strain G27) protein is Elongation factor P.